Here is an 89-residue protein sequence, read N- to C-terminus: Small ribosomal subunit protein uS17A (89 aa).

The protein belongs to the universal ribosomal protein uS17 family. Part of the 30S ribosomal subunit.

Functionally, one of the primary rRNA binding proteins, it binds specifically to the 5'-end of 16S ribosomal RNA. This Bacteroides thetaiotaomicron (strain ATCC 29148 / DSM 2079 / JCM 5827 / CCUG 10774 / NCTC 10582 / VPI-5482 / E50) protein is Small ribosomal subunit protein uS17A.